Consider the following 390-residue polypeptide: Trehalose-phosphate phosphatase (390 aa).

Residue Asp150 is the Nucleophile of the active site. Residues Asp150, Asp152, and Asp333 each contribute to the Mg(2+) site. 150 to 152 (DFD) is a binding site for substrate.

Belongs to the trehalose phosphatase family. Requires Mg(2+) as cofactor.

It catalyses the reaction alpha,alpha-trehalose 6-phosphate + H2O = alpha,alpha-trehalose + phosphate. Its pathway is glycan biosynthesis; trehalose biosynthesis. Removes the phosphate from trehalose 6-phosphate to produce free trehalose. This Mycobacterium ulcerans (strain Agy99) protein is Trehalose-phosphate phosphatase (otsB).